The sequence spans 753 residues: Enhancer of polycomb-like protein 1 (753 aa).

Disordered regions lie at residues 1 to 75 and 429 to 490; these read MAAA…RDLH and VRTE…LPPA. Polar residues predominate over residues 46–71; sequence LDSNELEPSQVHHLNSNASSSSTQQP. Residues 429 to 449 are compositionally biased toward basic and acidic residues; it reads VRTEDEEREKKREKKKQDQEL. Residues 450–463 are compositionally biased toward low complexity; it reads ALKQQQALQQQQQQ.

It belongs to the enhancer of polycomb family. In terms of assembly, component of the NuA4 histone acetyltransferase complex.

The protein localises to the nucleus. In terms of biological role, component of the NuA4 histone acetyltransferase complex which is involved in transcriptional activation of selected genes principally by acetylation of nucleosomal histone H4 and H2A. The NuA4 complex is also involved in DNA repair. Involved in gene silencing by neighboring heterochromatin, blockage of the silencing spreading along the chromosome, and required for cell cycle progression through G2/M. The protein is Enhancer of polycomb-like protein 1 (EPL1) of Candida albicans (strain SC5314 / ATCC MYA-2876) (Yeast).